Consider the following 118-residue polypeptide: Turripeptide NCR-01 (118 aa).

The signal sequence occupies residues 1–16 (MLRLILAVALVAACLA). Positions 63-118 (QGFQGFLPQPHQKRDSYQHGGYQHQQSFDNFQGSGGMNNDNSDDSFALRNFNNDGY) are disordered. Positions 85–102 (QHQQSFDNFQGSGGMNND) are enriched in polar residues.

In terms of tissue distribution, expressed by the venom duct.

Its subcellular location is the secreted. This Gemmula speciosa (Splendid gem-turris) protein is Turripeptide NCR-01.